The following is a 651-amino-acid chain: Receptor-like serine/threonine-protein kinase At4g25390 (651 aa).

The first 25 residues, 1–25, serve as a signal peptide directing secretion; it reads MPSRSISAPVPVLAPAPIVSSLVPA. At 26 to 40 the chain is on the extracellular side; that stretch reads APSGHQNKTTRIFPP. An N-linked (GlcNAc...) asparagine glycan is attached at Asn-32. Residues 41 to 61 form a helical membrane-spanning segment; that stretch reads FVVAGAGAGFSLFITLSVCFC. Over 62–651 the chain is Cytoplasmic; the sequence is KFSRKRSSPP…PLKTTRKQRR (590 aa). The segment at 66 to 87 is disordered; it reads KRSSPPAENASSSPRRPSPREF. Residues 69–87 are compositionally biased toward low complexity; sequence SPPAENASSSPRRPSPREF. A Protein kinase domain is found at 99 to 633; it reads FSQANRLGQG…LKGEVNLPEL (535 aa). ATP contacts are provided by residues 105 to 113 and Lys-127; that span reads LGQGGFGVV. Residue Asp-225 is the Proton acceptor of the active site.

It belongs to the protein kinase superfamily. Ser/Thr protein kinase family.

Its subcellular location is the cell membrane. The catalysed reaction is L-seryl-[protein] + ATP = O-phospho-L-seryl-[protein] + ADP + H(+). The enzyme catalyses L-threonyl-[protein] + ATP = O-phospho-L-threonyl-[protein] + ADP + H(+). The polypeptide is Receptor-like serine/threonine-protein kinase At4g25390 (Arabidopsis thaliana (Mouse-ear cress)).